Here is a 238-residue protein sequence, read N- to C-terminus: Heme oxygenase (238 aa).

His-17 is a heme b binding site.

It belongs to the heme oxygenase family.

Its subcellular location is the plastid. The protein resides in the chloroplast. It catalyses the reaction heme b + 3 reduced [NADPH--hemoprotein reductase] + 3 O2 = biliverdin IXalpha + CO + Fe(2+) + 3 oxidized [NADPH--hemoprotein reductase] + 3 H2O + H(+). In terms of biological role, catalyzes the opening of the heme ring with the release of iron. Key enzyme in the synthesis of the chromophoric part of the photosynthetic antennae. In Pyropia yezoensis (Susabi-nori), this protein is Heme oxygenase (pbsA).